Here is an 887-residue protein sequence, read N- to C-terminus: Lateral signaling target protein 2 homolog (887 aa).

A Glycyl lysine isopeptide (Lys-Gly) (interchain with G-Cter in ubiquitin) cross-link involves residue Lys-87. Residues 308–327 (PALSAPLPPEGPLSAKAKDP) form a disordered region. Ser-334 bears the Phosphoserine mark. Disordered regions lie at residues 354-396 (DEMS…GSDE) and 412-474 (ALAR…ASLA). A Phosphothreonine modification is found at Thr-516. The residue at position 586 (Ser-586) is a Phosphoserine; by MAP2K. A disordered region spans residues 599–714 (LAKASDRAPE…THAAPQATRE (116 aa)). Residues 602–612 (ASDRAPERQEE) are compositionally biased toward basic and acidic residues. Polar residues predominate over residues 638-648 (TSGSQVDTASG). Low complexity-rich tracts occupy residues 681–693 (SGSS…SCSS) and 700–711 (AAPAATHAAPQA). Residues 817-879 (DEACGFCTAC…THCYMFHVTP (63 aa)) form an FYVE-type zinc finger. Positions 823, 826, 839, 842, 847, 850, and 869 each coordinate Zn(2+). Thr-870 carries the post-translational modification Phosphothreonine; by MAP2K. Cys-872 lines the Zn(2+) pocket.

The protein belongs to the lst-2 family. As to quaternary structure, interacts with TRIM3. Post-translationally, monoubiquitination at Lys-87 prevents binding to phosphatidylinositol 3-phosphate (PI3P) and localization to early endosome membranes.

It localises to the cytoplasm. It is found in the cytosol. The protein localises to the early endosome membrane. In terms of biological role, negative regulator of epidermal growth factor receptor (EGFR) signaling. Acts by promoting EGFR degradation in endosomes when not monoubiquitinated. This Homo sapiens (Human) protein is Lateral signaling target protein 2 homolog (ZFYVE28).